The primary structure comprises 212 residues: ATP-dependent Clp protease proteolytic subunit (212 aa).

Catalysis depends on Ser-109, which acts as the Nucleophile. Residue His-134 is part of the active site.

This sequence belongs to the peptidase S14 family. In terms of assembly, fourteen ClpP subunits assemble into 2 heptameric rings which stack back to back to give a disk-like structure with a central cavity, resembling the structure of eukaryotic proteasomes.

Its subcellular location is the cytoplasm. The enzyme catalyses Hydrolysis of proteins to small peptides in the presence of ATP and magnesium. alpha-casein is the usual test substrate. In the absence of ATP, only oligopeptides shorter than five residues are hydrolyzed (such as succinyl-Leu-Tyr-|-NHMec, and Leu-Tyr-Leu-|-Tyr-Trp, in which cleavage of the -Tyr-|-Leu- and -Tyr-|-Trp bonds also occurs).. Functionally, cleaves peptides in various proteins in a process that requires ATP hydrolysis. Has a chymotrypsin-like activity. Plays a major role in the degradation of misfolded proteins. This chain is ATP-dependent Clp protease proteolytic subunit, found in Bdellovibrio bacteriovorus (strain ATCC 15356 / DSM 50701 / NCIMB 9529 / HD100).